We begin with the raw amino-acid sequence, 379 residues long: Chaperone protein DnaJ (379 aa).

Positions 5-70 constitute a J domain; sequence DYYEVLGVSR…QKRAAYDQYG (66 aa). The segment at 134–212 adopts a CR-type zinc-finger fold; sequence GVTKEIRIPT…CHGHGRVEKS (79 aa). Zn(2+) is bound by residues Cys147, Cys150, Cys164, Cys167, Cys186, Cys189, Cys200, and Cys203. 4 CXXCXGXG motif repeats span residues 147 to 154, 164 to 171, 186 to 193, and 200 to 207; these read CDVCHGSG, CPTCHGAG, CPHCHGRG, and CNKCHGHG.

It belongs to the DnaJ family. As to quaternary structure, homodimer. Requires Zn(2+) as cofactor.

The protein localises to the cytoplasm. Participates actively in the response to hyperosmotic and heat shock by preventing the aggregation of stress-denatured proteins and by disaggregating proteins, also in an autonomous, DnaK-independent fashion. Unfolded proteins bind initially to DnaJ; upon interaction with the DnaJ-bound protein, DnaK hydrolyzes its bound ATP, resulting in the formation of a stable complex. GrpE releases ADP from DnaK; ATP binding to DnaK triggers the release of the substrate protein, thus completing the reaction cycle. Several rounds of ATP-dependent interactions between DnaJ, DnaK and GrpE are required for fully efficient folding. Also involved, together with DnaK and GrpE, in the DNA replication of plasmids through activation of initiation proteins. This chain is Chaperone protein DnaJ, found in Yersinia pseudotuberculosis serotype O:1b (strain IP 31758).